The following is a 283-amino-acid chain: tRNA (guanine-N(1)-)-methyltransferase (283 aa).

Residues Gly113 and 133 to 138 (IGDYVL) contribute to the S-adenosyl-L-methionine site.

The protein belongs to the RNA methyltransferase TrmD family. In terms of assembly, homodimer.

It localises to the cytoplasm. It carries out the reaction guanosine(37) in tRNA + S-adenosyl-L-methionine = N(1)-methylguanosine(37) in tRNA + S-adenosyl-L-homocysteine + H(+). In terms of biological role, specifically methylates guanosine-37 in various tRNAs. This chain is tRNA (guanine-N(1)-)-methyltransferase, found in Parafrankia sp. (strain EAN1pec).